Consider the following 247-residue polypeptide: MIKLVLLRHGESQWNRENRFTGWRDIDLSEKGLAEAANAGVLMKEEGLTFDIAYTSVLKRAIRTLWNALDTMDLLWVPVEKTWRLNERHYGSLQGLNKTETAQLHGEEQVLVWRRSYDTPPPPLEKTDERYPGNDPRYASLSSEEIPVAECLKDTVARFLPYWHETIAPQIKAGKKVLIVAHGNSLRALVKYLDNISEEDIVGINIPTGIPLVYELDDDLKPIRHYYLGDQEAAAKAAAAVANQAKG.

Substrate contacts are provided by residues 8-15 (RHGESQWN), 21-22 (TG), Arg-60, 87-90 (ERHY), Lys-98, 114-115 (RR), and 183-184 (GN). The Tele-phosphohistidine intermediate role is filled by His-9. Glu-87 acts as the Proton donor/acceptor in catalysis.

Belongs to the phosphoglycerate mutase family. BPG-dependent PGAM subfamily.

The enzyme catalyses (2R)-2-phosphoglycerate = (2R)-3-phosphoglycerate. Its pathway is carbohydrate degradation; glycolysis; pyruvate from D-glyceraldehyde 3-phosphate: step 3/5. Catalyzes the interconversion of 2-phosphoglycerate and 3-phosphoglycerate. In Prosthecochloris aestuarii (strain DSM 271 / SK 413), this protein is 2,3-bisphosphoglycerate-dependent phosphoglycerate mutase.